We begin with the raw amino-acid sequence, 92 residues long: CRISPR-associated endoribonuclease Cas2 3 (92 aa).

Asp-9 contacts Mg(2+).

The protein belongs to the CRISPR-associated endoribonuclease Cas2 protein family. In terms of assembly, homodimer, forms a heterotetramer with a Cas1 homodimer. It depends on Mg(2+) as a cofactor.

Its function is as follows. CRISPR (clustered regularly interspaced short palindromic repeat), is an adaptive immune system that provides protection against mobile genetic elements (viruses, transposable elements and conjugative plasmids). CRISPR clusters contain sequences complementary to antecedent mobile elements and target invading nucleic acids. CRISPR clusters are transcribed and processed into CRISPR RNA (crRNA). Functions as a ssRNA-specific endoribonuclease. Involved in the integration of spacer DNA into the CRISPR cassette. The protein is CRISPR-associated endoribonuclease Cas2 3 of Synechocystis sp. (strain ATCC 27184 / PCC 6803 / Kazusa).